The sequence spans 843 residues: Protein P (843 aa).

Residues 1 to 177 are terminal protein domain (TP); sequence MPLSYQHFRK…FCGSPYSWEQ (177 aa). Positions 178 to 346 are spacer; the sequence is DLQHGRLVFQ…YCLSHIVNLI (169 aa). 2 disordered regions span residues 219-249 and 290-316; these read RKSRLGPQPTQGQLAGRPQGGSGSIRARIHP and STSKGHSSSGHAVELHHFPPNSSRSQS. Residues 290 to 299 show a composition bias toward polar residues; the sequence is STSKGHSSSG. The polymerase/reverse transcriptase domain (RT) stretch occupies residues 347–690; the sequence is EDWGPCAEHG…YMTLYPVARQ (344 aa). Positions 357–600 constitute a Reverse transcriptase domain; the sequence is EHRIRTPRTP…YSLNFMGYVI (244 aa). The Mg(2+) site is built by aspartate 429, aspartate 551, and aspartate 552.

Belongs to the hepadnaviridae P protein family.

It catalyses the reaction DNA(n) + a 2'-deoxyribonucleoside 5'-triphosphate = DNA(n+1) + diphosphate. The catalysed reaction is Endonucleolytic cleavage to 5'-phosphomonoester.. Activated by host HSP70 and HSP40 in vitro to be able to bind the epsilon loop of the pgRNA. Because deletion of the RNase H region renders the protein partly chaperone-independent, the chaperones may be needed indirectly to relieve occlusion of the RNA-binding site by this domain. Inhibited by several reverse-transcriptase inhibitors: Lamivudine, Adefovir and Entecavir. Multifunctional enzyme that converts the viral RNA genome into dsDNA in viral cytoplasmic capsids. This enzyme displays a DNA polymerase activity that can copy either DNA or RNA templates, and a ribonuclease H (RNase H) activity that cleaves the RNA strand of RNA-DNA heteroduplexes in a partially processive 3'- to 5'-endonucleasic mode. Neo-synthesized pregenomic RNA (pgRNA) are encapsidated together with the P protein, and reverse-transcribed inside the nucleocapsid. Initiation of reverse-transcription occurs first by binding the epsilon loop on the pgRNA genome, and is initiated by protein priming, thereby the 5'-end of (-)DNA is covalently linked to P protein. Partial (+)DNA is synthesized from the (-)DNA template and generates the relaxed circular DNA (RC-DNA) genome. After budding and infection, the RC-DNA migrates in the nucleus, and is converted into a plasmid-like covalently closed circular DNA (cccDNA). The activity of P protein does not seem to be necessary for cccDNA generation, and is presumably released from (+)DNA by host nuclear DNA repair machinery. The chain is Protein P from Homo sapiens (Human).